Here is a 128-residue protein sequence, read N- to C-terminus: Glycine cleavage system H protein (128 aa).

A Lipoyl-binding domain is found at 23 to 105 (VATVGISDHA…YEGGWLFKVQ (83 aa)). At Lys-64 the chain carries N6-lipoyllysine.

This sequence belongs to the GcvH family. As to quaternary structure, the glycine cleavage system is composed of four proteins: P, T, L and H. It depends on (R)-lipoate as a cofactor.

Functionally, the glycine cleavage system catalyzes the degradation of glycine. The H protein shuttles the methylamine group of glycine from the P protein to the T protein. The polypeptide is Glycine cleavage system H protein (Alcanivorax borkumensis (strain ATCC 700651 / DSM 11573 / NCIMB 13689 / SK2)).